A 667-amino-acid polypeptide reads, in one-letter code: Receptor for retinol uptake STRA6 (667 aa).

Residues 1 to 13 (MSSQPAGNQTSPG) show a composition bias toward polar residues. The tract at residues 1-22 (MSSQPAGNQTSPGPTEDYSYGS) is disordered. At 1-50 (MSSQPAGNQTSPGPTEDYSYGSWYIDEPQGGEELQPEGEVPSCHTSIPPS) the chain is on the extracellular side. Residue Asn8 is glycosylated (N-linked (GlcNAc...) asparagine). A helical transmembrane segment spans residues 51–71 (LYHACLASLSILVLLLLAMLV). At 72–98 (RRRQLWPDCVRGRPGLPSPVDFLAGDR) the chain is on the cytoplasmic side. The helical transmembrane segment at 99–119 (PQAVPAAVFVVLFSSLCLLLP) threads the bilayer. At 120-144 (DEDPLPFLTLASAPSQDGKTEAPRG) the chain is on the extracellular side. The chain crosses the membrane as a helical span at residues 145 to 165 (AWKILGLFYYAALCYPLAACA). Over 166–168 (TAG) the chain is Cytoplasmic. The helical transmembrane segment at 169-189 (HTAAHLLGSTLSWAHLGVQVW) threads the bilayer. Residues 190 to 205 (QRAECPQVPKIYKYYS) lie on the Extracellular side of the membrane. Residues 206–226 (LLASLPLLLGLGFLSLWYPVQ) traverse the membrane as a helical segment. The Cytoplasmic segment spans residues 227–295 (LVRSFSCRTG…PQPGFRLPLK (69 aa)). Positions 235 to 293 (TGAGSKGLQSSYSEEYLRNLLCRKKLGSSSHTSKHGFLSWAWVCLRHCIYTPQPGFRLP) are interaction with RBP1. Residues 296–316 (LVLSATLTGTAIYQVALLLLV) traverse the membrane as a helical segment. Residues 317 to 367 (GMVPNIQKVRAGVTTDVSYLLAGFGIVLSEDKQEVVELVKHHLWALEVCYI) lie on the Extracellular side of the membrane. The helical transmembrane segment at 368–388 (SALVLSCSLTFLVLMRSLVTH) threads the bilayer. Over 389 to 422 (RTNLRALHRGAALDSSPLHRSPHPSRRAIFCWMS) the chain is Cytoplasmic. A helical membrane pass occupies residues 423–443 (FSAYQTAFICLGLLVQQIIFF). The Extracellular portion of the chain corresponds to 444–473 (LGTTALAFLVLMPVLHGRNLLLFRSLESSW). The helical transmembrane segment at 474 to 494 (PFWLTLALAVILQSMAAHWVF) threads the bilayer. At 495 to 509 (LETHDGHPQLTNRRV) the chain is on the cytoplasmic side. The segment at residues 510-547 (LYAATFLLFPLNVLVGAMVATWRVLLSALYNAIHLGQM) is an intramembrane region (helical). The Cytoplasmic portion of the chain corresponds to 548–667 (DLSLLPPRAA…ALLGANGAQP (120 aa)). The residue at position 643 (Tyr643) is a Phosphotyrosine.

Homodimer. Interacts with JAK2 and STAT5. Interacts (via extracellular domains) with RBP4. Interacts (via cytoplasmic domains) with RBP1. Phosphorylated on tyrosine residues in response to RBP4 binding. Phosphorylation requires the presence of LRAT, suggesting it may be triggered by the uptake of retinol that is then metabolized within the cell to retinoids that function as signaling molecules.

It is found in the cell membrane. Its function is as follows. Functions as a retinol transporter. Accepts all-trans retinol from the extracellular retinol-binding protein RBP4, facilitates retinol transport across the cell membrane, and then transfers retinol to the cytoplasmic retinol-binding protein RBP1. Retinol uptake is enhanced by LRAT, an enzyme that converts retinol to all-trans retinyl esters, the storage forms of vitamin A. Contributes to the activation of a signaling cascade that depends on retinol transport and LRAT-dependent generation of retinol metabolites that then trigger activation of JAK2 and its target STAT5, and ultimately increase the expression of SOCS3 and inhibit cellular responses to insulin. Important for the homeostasis of vitamin A and its derivatives, such as retinoic acid. STRA6-mediated transport is particularly important in the eye, and under conditions of dietary vitamin A deficiency. Does not transport retinoic acid. The polypeptide is Receptor for retinol uptake STRA6 (STRA6) (Pongo abelii (Sumatran orangutan)).